We begin with the raw amino-acid sequence, 652 residues long: Carboxypeptidase S1 homolog A (652 aa).

The signal sequence occupies residues 1–19 (MRFAASIAVALPVIHAASA). Cys50 and Cys121 are joined by a disulfide. N-linked (GlcNAc...) asparagine glycans are attached at residues Asn77, Asn132, Asn161, Asn168, Asn184, and Asn202. Ser238 is a catalytic residue. Residues Asn260, Asn299, Asn347, and Asn410 are each glycosylated (N-linked (GlcNAc...) asparagine). Cystine bridges form between Cys325/Cys361 and Cys332/Cys354. Residue Asp458 is part of the active site. Substrate is bound at residue Cys461. Residues Asn474, Asn492, and Asn505 are each glycosylated (N-linked (GlcNAc...) asparagine). Residue His516 is part of the active site. Residue Glu517 coordinates substrate. Residues 608–627 (AASKGNPPPTTTSSPTAAPT) are disordered. Over residues 618 to 627 (TTSSPTAAPT) the composition is skewed to low complexity. A lipid anchor (GPI-anchor amidated glycine) is attached at Gly629. A propeptide spans 630-652 (SAMLKAPVAMLAISALTVLAFFL) (removed in mature form).

The protein belongs to the peptidase S10 family.

It is found in the cell membrane. It carries out the reaction Preferential release of a C-terminal arginine or lysine residue.. Its function is as follows. Extracellular serine carboxypeptidase that contributes to pathogenicity. The protein is Carboxypeptidase S1 homolog A (SCPA) of Trichophyton rubrum (Athlete's foot fungus).